The chain runs to 202 residues: ATP-dependent Clp protease proteolytic subunit (202 aa).

S101 functions as the Nucleophile in the catalytic mechanism. Residue H126 is part of the active site.

The protein belongs to the peptidase S14 family. As to quaternary structure, component of the chloroplastic Clp protease core complex.

Its subcellular location is the plastid. The protein localises to the chloroplast stroma. It catalyses the reaction Hydrolysis of proteins to small peptides in the presence of ATP and magnesium. alpha-casein is the usual test substrate. In the absence of ATP, only oligopeptides shorter than five residues are hydrolyzed (such as succinyl-Leu-Tyr-|-NHMec, and Leu-Tyr-Leu-|-Tyr-Trp, in which cleavage of the -Tyr-|-Leu- and -Tyr-|-Trp bonds also occurs).. In terms of biological role, cleaves peptides in various proteins in a process that requires ATP hydrolysis. Has a chymotrypsin-like activity. Plays a major role in the degradation of misfolded proteins. The chain is ATP-dependent Clp protease proteolytic subunit from Calycanthus floridus var. glaucus (Eastern sweetshrub).